The sequence spans 228 residues: Translin (228 aa).

The tract at residues 86-90 (RFHEH) is DNA/RNA binding. Residues 177–198 (LDSGFRLLNLKNDSLRKRYDGL) are leucine-zipper. Lys-187 carries the N6-acetyllysine modification. The residue at position 190 (Ser-190) is a Phosphoserine. Residue Lys-199 is modified to N6-acetyllysine.

It belongs to the translin family. As to quaternary structure, ring-shaped heterooctamer of six TSN and two TSNAX subunits, DNA/RNA binding occurs inside the ring.

It localises to the cytoplasm. The protein localises to the nucleus. Functionally, DNA-binding protein that specifically recognizes consensus sequences at the breakpoint junctions in chromosomal translocations, mostly involving immunoglobulin (Ig)/T-cell receptor gene segments. Seems to recognize single-stranded DNA ends generated by staggered breaks occurring at recombination hot spots. In terms of biological role, exhibits both single-stranded and double-stranded endoribonuclease activity. May act as an activator of RNA-induced silencing complex (RISC) by facilitating endonucleolytic cleavage of the siRNA passenger strand. The chain is Translin from Homo sapiens (Human).